We begin with the raw amino-acid sequence, 184 residues long: ATP synthase subunit b, chloroplastic (184 aa).

The chain crosses the membrane as a helical span at residues 27-49 (LATNLINLSVVIGVLIFFGKGVL).

The protein belongs to the ATPase B chain family. In terms of assembly, F-type ATPases have 2 components, F(1) - the catalytic core - and F(0) - the membrane proton channel. F(1) has five subunits: alpha(3), beta(3), gamma(1), delta(1), epsilon(1). F(0) has four main subunits: a(1), b(1), b'(1) and c(10-14). The alpha and beta chains form an alternating ring which encloses part of the gamma chain. F(1) is attached to F(0) by a central stalk formed by the gamma and epsilon chains, while a peripheral stalk is formed by the delta, b and b' chains.

Its subcellular location is the plastid. The protein localises to the chloroplast thylakoid membrane. In terms of biological role, f(1)F(0) ATP synthase produces ATP from ADP in the presence of a proton or sodium gradient. F-type ATPases consist of two structural domains, F(1) containing the extramembraneous catalytic core and F(0) containing the membrane proton channel, linked together by a central stalk and a peripheral stalk. During catalysis, ATP synthesis in the catalytic domain of F(1) is coupled via a rotary mechanism of the central stalk subunits to proton translocation. Its function is as follows. Component of the F(0) channel, it forms part of the peripheral stalk, linking F(1) to F(0). The polypeptide is ATP synthase subunit b, chloroplastic (Jasminum nudiflorum (Winter jasmine)).